Consider the following 447-residue polypeptide: Cysteine--tRNA ligase (447 aa).

Cysteine 28 lines the Zn(2+) pocket. The short motif at 30–40 is the 'HIGH' region element; the sequence is PTVYNYIHIGN. Zn(2+) contacts are provided by cysteine 211, histidine 236, and glutamate 240. The 'KMSKS' region signature appears at 268–272; that stretch reads KMSKS. Residue lysine 271 participates in ATP binding.

Belongs to the class-I aminoacyl-tRNA synthetase family. As to quaternary structure, monomer. Requires Zn(2+) as cofactor.

The protein resides in the cytoplasm. The enzyme catalyses tRNA(Cys) + L-cysteine + ATP = L-cysteinyl-tRNA(Cys) + AMP + diphosphate. This Streptococcus agalactiae serotype V (strain ATCC BAA-611 / 2603 V/R) protein is Cysteine--tRNA ligase.